The following is a 227-amino-acid chain: Transcriptional regulatory protein CusR (227 aa).

A Response regulatory domain is found at 2-116 (KLLIVEDEKK…ELLARVRTLL (115 aa)). Residue aspartate 51 is modified to 4-aspartylphosphate. The segment at residues 125–223 (ESQFQVADLM…VRGVGYMLEV (99 aa)) is a DNA-binding region (ompR/PhoB-type).

Post-translationally, phosphorylated by CusS.

It is found in the cytoplasm. Functionally, member of the two-component regulatory system CusS/CusR involved in response to copper and silver. In Escherichia coli O6:H1 (strain CFT073 / ATCC 700928 / UPEC), this protein is Transcriptional regulatory protein CusR (cusR).